The chain runs to 59 residues: Small, acid-soluble spore protein H 2 (59 aa).

The protein belongs to the SspH family.

It is found in the spore core. This Bacillus cytotoxicus (strain DSM 22905 / CIP 110041 / 391-98 / NVH 391-98) protein is Small, acid-soluble spore protein H 2.